A 295-amino-acid chain; its full sequence is Protein gurken (295 aa).

The N-terminal stretch at 1 to 26 (MMQIPFTRIFKVIFVLSTIVAVTDCC) is a signal peptide. Residues 27–247 (SSRILLLREH…TAQRKVRMAH (221 aa)) are Extracellular-facing. 2 disordered regions span residues 78–111 (EASAQEEADQLHPDTDPNPDSGGQLPNADDSIAA) and 124–175 (TDTW…NDKE). The span at 124–139 (TDTWLASESSTPITDS) shows a compositional bias: polar residues. Low complexity-rich tracts occupy residues 140–152 (ETVTTPETVTHTG) and 159–171 (SSSSTPDSTTPSP). The EGF-like domain occupies 179 to 224 (QMLPCSEAYNTSFCLNGGHCFQHPMVNNTVFHSCLCVNDYDGERCA). Disulfide bonds link Cys183–Cys198, Cys192–Cys212, and Cys214–Cys223. Asn188 and Asn205 each carry an N-linked (GlcNAc...) asparagine glycan. Positions 215–245 (VNDYDGERCAYKSWNGDYIYSPPTAQRKVRM) are interaction with cni. Residues 248 to 268 (IVFSFPVLLMLSSLYVLFAAV) traverse the membrane as a helical segment. Residues 269 to 295 (FMLRNVPDYRRKQQQLHLHKQRFFVRC) lie on the Cytoplasmic side of the membrane.

Interacts with cni. Expressed in nurse cells and oocyte up to oogenesis stage 7. Specifically accumulates in dorsal anterior corner of the oocyte during stages 9/10, at later stages expression is seen as an anterior ring. In stage 10 ovaries, it is concentrated between the oocyte nucleus and the adjacent oolemma. During vitellogenesis stage it can be detected at the oocyte surface, especially on the microvilli. It is also found at the microvilli covering the apical surface of the follicular epithelium and within follicle cells.

Its subcellular location is the cell membrane. Functionally, critical for defining the anterior-posterior and dorsal-ventral axes of the egg. May signal directly to dorsal follicle cells through the receptor torpedo (top). During oogenesis this signaling pathway instructs follicle cells to follow a dorsal pathway of development rather than the default ventral pathway. This is Protein gurken (grk) from Drosophila melanogaster (Fruit fly).